An 81-amino-acid polypeptide reads, in one-letter code: Exodeoxyribonuclease 7 small subunit (81 aa).

Residues leucine 60–leucine 70 are compositionally biased toward basic and acidic residues. Residues leucine 60–glutamate 81 are disordered.

The protein belongs to the XseB family. Heterooligomer composed of large and small subunits.

Its subcellular location is the cytoplasm. The enzyme catalyses Exonucleolytic cleavage in either 5'- to 3'- or 3'- to 5'-direction to yield nucleoside 5'-phosphates.. Bidirectionally degrades single-stranded DNA into large acid-insoluble oligonucleotides, which are then degraded further into small acid-soluble oligonucleotides. In Lactobacillus johnsonii (strain CNCM I-12250 / La1 / NCC 533), this protein is Exodeoxyribonuclease 7 small subunit.